Reading from the N-terminus, the 330-residue chain is Aspartate--ammonia ligase (330 aa).

It belongs to the class-II aminoacyl-tRNA synthetase family. AsnA subfamily.

The protein resides in the cytoplasm. It carries out the reaction L-aspartate + NH4(+) + ATP = L-asparagine + AMP + diphosphate + H(+). It functions in the pathway amino-acid biosynthesis; L-asparagine biosynthesis; L-asparagine from L-aspartate (ammonia route): step 1/1. This Salmonella paratyphi A (strain ATCC 9150 / SARB42) protein is Aspartate--ammonia ligase.